The primary structure comprises 61 residues: MARYRHSRSRSRXRYRRRRRRRSRYRSRRRRYRGSRRSRSRRRGRRRGYSRRRYSRRRRRY.

The tract at residues 1 to 61 (MARYRHSRSR…RRYSRRRRRY (61 aa)) is disordered.

The protein belongs to the protamine P1 family. In terms of tissue distribution, testis.

It localises to the nucleus. The protein resides in the chromosome. Functionally, protamines substitute for histones in the chromatin of sperm during the haploid phase of spermatogenesis. They compact sperm DNA into a highly condensed, stable and inactive complex. The chain is Sperm protamine P1 (PRM1) from Potorous longipes (Long-footed potoroo).